The chain runs to 506 residues: Protein spinster homolog 1 (506 aa).

A disordered region spans residues methionine 1–valine 42. Residues proline 21–leucine 30 show a composition bias toward low complexity. The next 12 helical transmembrane spans lie at isoleucine 52–valine 71, glycine 87–leucine 107, leucine 115–glycine 135, valine 149–valine 169, methionine 176–serine 196, tryptophan 207–valine 227, phenylalanine 266–leucine 286, leucine 310–alanine 330, leucine 344–alanine 364, valine 373–leucine 393, phenylalanine 408–valine 428, and leucine 450–isoleucine 470.

It belongs to the major facilitator superfamily. Spinster (TC 2.A.1.49) family. Expressed in yolk cells.

The protein resides in the lysosome membrane. The enzyme catalyses a 1-acyl-sn-glycero-3-phosphocholine(out) + H(+)(out) = a 1-acyl-sn-glycero-3-phosphocholine(in) + H(+)(in). It carries out the reaction a 1-acyl-sn-glycero-3-phosphoethanolamine(out) + H(+)(out) = a 1-acyl-sn-glycero-3-phosphoethanolamine(in) + H(+)(in). It catalyses the reaction a 1-O-(1Z-alkenyl)-sn-glycero-3-phosphocholine(out) + H(+)(out) = a 1-O-(1Z-alkenyl)-sn-glycero-3-phosphocholine(in) + H(+)(in). The catalysed reaction is a 1-O-(1Z-alkenyl)-sn-glycero-3-phosphoethanolamine(out) + H(+)(out) = a 1-O-(1Z-alkenyl)-sn-glycero-3-phosphoethanolamine(in) + H(+)(in). Its function is as follows. Mediates the rate-limiting, proton-dependent, lysosomal efflux of lysophospholipids. Selective for zwitterionic headgroups such as lysophosphatidylcholine (LPC) and lysophosphatidylethanolamine (LPE). Essential player in lysosomal homeostasis. Critical for embryogenesis. Involved in the regulation of developmental senescence. The protein is Protein spinster homolog 1 (spns1) of Danio rerio (Zebrafish).